The chain runs to 297 residues: Acetylglutamate kinase (297 aa).

Residues 68–69, R90, and N195 each bind substrate; that span reads GG.

This sequence belongs to the acetylglutamate kinase family. ArgB subfamily.

Its subcellular location is the cytoplasm. It catalyses the reaction N-acetyl-L-glutamate + ATP = N-acetyl-L-glutamyl 5-phosphate + ADP. It participates in amino-acid biosynthesis; L-arginine biosynthesis; N(2)-acetyl-L-ornithine from L-glutamate: step 2/4. In terms of biological role, catalyzes the ATP-dependent phosphorylation of N-acetyl-L-glutamate. This is Acetylglutamate kinase from Chelativorans sp. (strain BNC1).